The following is a 103-amino-acid chain: Sperm-associated antigen 11A (103 aa).

The first 24 residues, 1 to 24, serve as a signal peptide directing secretion; that stretch reads MRQRLLPSVTSLLLVALLFPGSSQ. Asn29 carries N-linked (GlcNAc...) asparagine glycosylation.

It belongs to the SPAG11 family.

The protein resides in the secreted. Has antimicrobial activity against E.coli. Plays a role in the defense response in the male reproductive tract, contributing to sperm maturation, storage and protection. The chain is Sperm-associated antigen 11A from Pan troglodytes (Chimpanzee).